Here is a 481-residue protein sequence, read N- to C-terminus: Probable autolysin LytO (481 aa).

The Peptidase C51 domain maps to lysine 7–arginine 148. A compositionally biased stretch (polar residues) spans threonine 155–glutamine 165. Residues threonine 155–lysine 177 are disordered. The N-acetylmuramoyl-L-alanine amidase domain maps to serine 198 to histidine 323. An SH3b domain is found at glutamate 398–serine 466.

This sequence belongs to the N-acetylmuramoyl-L-alanine amidase 2 family.

The catalysed reaction is Hydrolyzes the link between N-acetylmuramoyl residues and L-amino acid residues in certain cell-wall glycopeptides.. Has weak lytic activity toward S.aureus cells. This Staphylococcus aureus (strain NCTC 8325 / PS 47) protein is Probable autolysin LytO.